Consider the following 1372-residue polypeptide: Serine protease pic autotransporter (1372 aa).

Residues 1–55 (MNKVYSLKYCPVTGGLIAVSELARRVIKKTCRRLTHILLAGIPAICLCYSQISQA) form the signal peptide. Residues 56–301 (GIVRSDIAYQ…NVIPTDYLNQ (246 aa)) enclose the Peptidase S6 domain. Active-site charge relay system residues include His-127, Asp-155, and Ser-258. In terms of domain architecture, Autotransporter spans 1106–1372 (DTNGDAGAWA…AVNANFRYMF (267 aa)).

In terms of processing, cleaved to release the mature protein from the outer membrane.

It is found in the periplasm. It localises to the secreted. Its subcellular location is the cell surface. The protein localises to the cell outer membrane. Its function is as follows. Involved in intestinal colonization, displays in vitro mucinolytic activity, serum resistance, and hemagglutination. Important to penetrate the intestinal mucus layer. This is Serine protease pic autotransporter (pic) from Shigella flexneri.